The following is a 158-amino-acid chain: Snaclec mucrocetin subunit alpha (158 aa).

The signal sequence occupies residues 1–23 (MGRFIFVSFGLLVVFLSLSGTGA). 3 disulfide bridges follow: cysteine 27–cysteine 38, cysteine 55–cysteine 152, and cysteine 127–cysteine 144. The region spanning 34 to 153 (YDRYCYQAFS…CGRENPFVCK (120 aa)) is the C-type lectin domain.

Belongs to the snaclec family. As to quaternary structure, tetramer of heterodimers of alpha and beta subunits (alphabeta)(4); disulfide-linked. In terms of tissue distribution, expressed by the venom gland.

It localises to the secreted. Platelet-agglutinating factor that acts in a vWF-independent manner. Binds specifically to platelet GPIbalpha (GP1BA) to a distinct binding site from that of flavocetin-A. This is Snaclec mucrocetin subunit alpha from Protobothrops mucrosquamatus (Taiwan habu).